The chain runs to 279 residues: Ribosomal RNA small subunit methyltransferase A (279 aa).

S-adenosyl-L-methionine-binding residues include histidine 10, leucine 12, glycine 37, glutamate 58, aspartate 83, and asparagine 108.

It belongs to the class I-like SAM-binding methyltransferase superfamily. rRNA adenine N(6)-methyltransferase family. RsmA subfamily.

It is found in the cytoplasm. It catalyses the reaction adenosine(1518)/adenosine(1519) in 16S rRNA + 4 S-adenosyl-L-methionine = N(6)-dimethyladenosine(1518)/N(6)-dimethyladenosine(1519) in 16S rRNA + 4 S-adenosyl-L-homocysteine + 4 H(+). Functionally, specifically dimethylates two adjacent adenosines (A1518 and A1519) in the loop of a conserved hairpin near the 3'-end of 16S rRNA in the 30S particle. May play a critical role in biogenesis of 30S subunits. This chain is Ribosomal RNA small subunit methyltransferase A, found in Synechococcus elongatus (strain ATCC 33912 / PCC 7942 / FACHB-805) (Anacystis nidulans R2).